The chain runs to 620 residues: Dopamine beta-hydroxylase (620 aa).

Residues 1–19 (MQPHLSHQPCWSLPSPSVR) are Cytoplasmic-facing. A helical; Signal-anchor for type II membrane protein transmembrane segment spans residues 20 to 40 (EAASMYGTAVAIFLVILVAAL). The Intragranular portion of the chain corresponds to 41 to 620 (QGSEPPESPF…FVVITHGGRH (580 aa)). The DOMON domain maps to 60–176 (GTLELSWNVS…DTVHLVYGIL (117 aa)). N-linked (GlcNAc...) asparagine glycosylation is found at asparagine 67 and asparagine 187. 6 disulfide bridges follow: cysteine 157-cysteine 599, cysteine 235-cysteine 286, cysteine 272-cysteine 298, cysteine 393-cysteine 506, cysteine 397-cysteine 568, and cysteine 469-cysteine 491. The active site involves tyrosine 233. The Cu(2+) site is built by histidine 265 and histidine 266. The N-linked (GlcNAc...) asparagine glycan is linked to asparagine 274. Histidine 336 is a Cu(2+) binding site. The residue at position 349 (serine 349) is a Phosphoserine; by CaMK. Residue histidine 415 is part of the active site. Cu(2+) is bound by residues histidine 415 and histidine 417. The N-linked (GlcNAc...) asparagine glycan is linked to asparagine 475. A Cu(2+)-binding site is contributed by methionine 490. N-linked (GlcNAc...) asparagine glycosylation is found at asparagine 569 and asparagine 587.

The protein belongs to the copper type II ascorbate-dependent monooxygenase family. Homotetramer; composed of two disulfide-linked dimers. Cu(2+) serves as cofactor. In terms of processing, proteolytic cleavage after the membrane-anchor leads to the release of the soluble form. Post-translationally, N-glycosylated. In terms of tissue distribution, chromaffin granules of the adrenal medulla and synaptic vesicles of the sympathetic nervous system.

The protein resides in the cytoplasmic vesicle. It localises to the secretory vesicle lumen. Its subcellular location is the secretory vesicle. The protein localises to the chromaffin granule lumen. It is found in the secreted. The protein resides in the secretory vesicle membrane. It localises to the chromaffin granule membrane. It catalyses the reaction dopamine + 2 L-ascorbate + O2 = (R)-noradrenaline + 2 monodehydro-L-ascorbate radical + H2O. Its pathway is catecholamine biosynthesis; (R)-noradrenaline biosynthesis; (R)-noradrenaline from dopamine: step 1/1. In terms of biological role, catalyzes the hydroxylation of dopamine to noradrenaline (also known as norepinephrine), and is thus vital for regulation of these neurotransmitters. The sequence is that of Dopamine beta-hydroxylase (Dbh) from Rattus norvegicus (Rat).